The primary structure comprises 41 residues: MKVRNSLKSLRSRHRDNRLVRRKGRIYVINKVQRRFKARQG.

The protein belongs to the bacterial ribosomal protein bL36 family.

The protein is Large ribosomal subunit protein bL36 of Rhodopseudomonas palustris (strain BisB5).